The sequence spans 491 residues: Proline--tRNA ligase (491 aa).

The protein belongs to the class-II aminoacyl-tRNA synthetase family. ProS type 3 subfamily. Homodimer.

The protein resides in the cytoplasm. The enzyme catalyses tRNA(Pro) + L-proline + ATP = L-prolyl-tRNA(Pro) + AMP + diphosphate. Functionally, catalyzes the attachment of proline to tRNA(Pro) in a two-step reaction: proline is first activated by ATP to form Pro-AMP and then transferred to the acceptor end of tRNA(Pro). This Cytophaga hutchinsonii (strain ATCC 33406 / DSM 1761 / CIP 103989 / NBRC 15051 / NCIMB 9469 / D465) protein is Proline--tRNA ligase.